We begin with the raw amino-acid sequence, 306 residues long: Mitochondrial basic amino acids transporter (306 aa).

6 consecutive transmembrane segments (helical) span residues 2-22, 61-81, 96-116, 153-172, 187-207, and 255-275; these read ALDF…GHPF, GLGS…GVQG, FLAG…MELA, GMVS…FLTY, LLVP…WLST, and LLRA…VLTY. 3 Solcar repeats span residues 2–86, 90–178, and 190–275; these read ALDF…TLRA, DSPL…MTRA, and PKLL…VLTY. Positions 284 to 306 are disordered; the sequence is DSEAALGTSPTPAGSALAQPSSL. Polar residues predominate over residues 291 to 306; that stretch reads TSPTPAGSALAQPSSL.

This sequence belongs to the mitochondrial carrier (TC 2.A.29) family. In terms of tissue distribution, widely expressed, with highest levels in the brain, including cortex, cerebellum, hippocampus and hypothalamus, and moderate levels in liver, kidney, heart and testis.

The protein resides in the mitochondrion inner membrane. The catalysed reaction is L-lysine(out) + L-arginine(in) = L-lysine(in) + L-arginine(out). It carries out the reaction L-histidine(out) + L-arginine(in) = L-histidine(in) + L-arginine(out). It catalyses the reaction L-ornithine(in) + L-arginine(out) = L-ornithine(out) + L-arginine(in). The enzyme catalyses L-homoarginine(in) + L-arginine(out) = L-homoarginine(out) + L-arginine(in). The catalysed reaction is N(omega)-methyl-L-arginine(in) + L-arginine(out) = N(omega)-methyl-L-arginine(out) + L-arginine(in). It carries out the reaction L-arginine(in) = L-arginine(out). It catalyses the reaction L-lysine(in) = L-lysine(out). The enzyme catalyses L-ornithine(in) = L-ornithine(out). The catalysed reaction is L-histidine(out) = L-histidine(in). Functionally, mitochondrial transporter of arginine, lysine, homoarginine, methylarginine. Transports with a much lesser extent, ornithine and histidine. Does not transport carnitine nor acylcarnitines. Functions by both counter-exchange and uniport mechanisms. Plays a physiological role in the import of basic amino acids into mitochondria for mitochondrial protein synthesis and amino acid degradation. The protein is Mitochondrial basic amino acids transporter (Slc25a29) of Mus musculus (Mouse).